A 312-amino-acid polypeptide reads, in one-letter code: Regulation of nuclear pre-mRNA domain-containing protein 1A (312 aa).

Ser2 carries the post-translational modification N-acetylserine. In terms of domain architecture, CID spans 2 to 133 (SAFSEAALEK…QLKQALYGDK (132 aa)). Phosphoserine occurs at positions 153, 156, and 285. Positions 244-286 (LADFLRCQKEALAEKEHKLEEYKRKLARVSLVRKELRSRIQSL) form a coiled coil.

Belongs to the UPF0400 (RTT103) family. In terms of assembly, may form a heterodimer with RPRD1B. Associates with the RNA polymerase II subunit POLR2A (via CTD phosphorylated at 'Ser-2' and 'Ser-7' of the heptad repeats).

Its subcellular location is the nucleus. Functionally, interacts with phosphorylated C-terminal heptapeptide repeat domain (CTD) of the largest RNA polymerase II subunit POLR2A, and participates in dephosphorylation of the CTD by RPAP2. May act as a negative regulator of cyclin-D1 (CCND1) and cyclin-E (CCNE1) in the cell cycle. In Pongo abelii (Sumatran orangutan), this protein is Regulation of nuclear pre-mRNA domain-containing protein 1A (RPRD1A).